The primary structure comprises 612 residues: Sulfite reductase [NADPH] hemoprotein beta-component (612 aa).

A disordered region spans residues 1 to 32; the sequence is MDDHKPIDTPDGPAVDTPGIGAHRYEAPPTDR. The [4Fe-4S] cluster site is built by cysteine 469, cysteine 475, cysteine 514, and cysteine 518. Cysteine 518 is a siroheme binding site.

This sequence belongs to the nitrite and sulfite reductase 4Fe-4S domain family. As to quaternary structure, alpha(8)-beta(8). The alpha component is a flavoprotein, the beta component is a hemoprotein. Siroheme serves as cofactor. The cofactor is [4Fe-4S] cluster.

The enzyme catalyses hydrogen sulfide + 3 NADP(+) + 3 H2O = sulfite + 3 NADPH + 4 H(+). It functions in the pathway sulfur metabolism; hydrogen sulfide biosynthesis; hydrogen sulfide from sulfite (NADPH route): step 1/1. Its function is as follows. Component of the sulfite reductase complex that catalyzes the 6-electron reduction of sulfite to sulfide. This is one of several activities required for the biosynthesis of L-cysteine from sulfate. The protein is Sulfite reductase [NADPH] hemoprotein beta-component of Methylorubrum populi (strain ATCC BAA-705 / NCIMB 13946 / BJ001) (Methylobacterium populi).